A 541-amino-acid polypeptide reads, in one-letter code: Membrane protein insertase YidC (541 aa).

The next 6 helical transmembrane spans lie at 6–26, 325–345, 349–369, 420–440, 457–477, and 500–520; these read NILL…WQAD, LVVD…LLMF, FVGN…GLLF, GGCL…WVLL, LSVQ…MFIM, and VIFT…WLVG.

The protein belongs to the OXA1/ALB3/YidC family. Type 1 subfamily. Interacts with the Sec translocase complex via SecD. Specifically interacts with transmembrane segments of nascent integral membrane proteins during membrane integration.

It is found in the cell inner membrane. Required for the insertion and/or proper folding and/or complex formation of integral membrane proteins into the membrane. Involved in integration of membrane proteins that insert both dependently and independently of the Sec translocase complex, as well as at least some lipoproteins. Aids folding of multispanning membrane proteins. The polypeptide is Membrane protein insertase YidC (Shewanella sp. (strain W3-18-1)).